The primary structure comprises 381 residues: MTGSTFPTDPVALARDLLRCQSVTPADGGAQALLAGVLEGMGFETFHLPFGPADVPTPNLYARLGKGHPALCFAGHTDVVPPGEGWAHDPFAAVIEGDRLYGRGIADMKGGVACFVAAVARRLEQGPLKGSVSLLITGDEEGPAHFGTKPVIEWLAERGELPDFCVLGEPTNPQALGDVIKIGRRGSMNAVVTVHGTQGHVAYPHLADNPVHRLLAAFSELTARELDAGSEWFDPSSLQVTSIDVGNGATNIIPGSAVGRLNIRFNDLHTGAALTAWIEDVVRRHAPQADVQVSISGEAFLTQPGDAVTCLSEAVRSVTGRTPRLDTGGGTSDARFISQYCEVAEFGLVGATMHKRDENVELGTLEDLTRIYLAFMEGYGL.

A Zn(2+)-binding site is contributed by histidine 76. Aspartate 78 is a catalytic residue. Aspartate 107 lines the Zn(2+) pocket. Glutamate 140 serves as the catalytic Proton acceptor. 3 residues coordinate Zn(2+): glutamate 141, glutamate 169, and histidine 354.

This sequence belongs to the peptidase M20A family. DapE subfamily. Homodimer. Zn(2+) is required as a cofactor. It depends on Co(2+) as a cofactor.

The catalysed reaction is N-succinyl-(2S,6S)-2,6-diaminopimelate + H2O = (2S,6S)-2,6-diaminopimelate + succinate. It functions in the pathway amino-acid biosynthesis; L-lysine biosynthesis via DAP pathway; LL-2,6-diaminopimelate from (S)-tetrahydrodipicolinate (succinylase route): step 3/3. Functionally, catalyzes the hydrolysis of N-succinyl-L,L-diaminopimelic acid (SDAP), forming succinate and LL-2,6-diaminopimelate (DAP), an intermediate involved in the bacterial biosynthesis of lysine and meso-diaminopimelic acid, an essential component of bacterial cell walls. In Gluconobacter oxydans (strain 621H) (Gluconobacter suboxydans), this protein is Succinyl-diaminopimelate desuccinylase.